We begin with the raw amino-acid sequence, 136 residues long: Diuretic hormone 41 (136 aa).

An N-terminal signal peptide occupies residues 1 to 26 (MMWWAVWCAAMVAGSVFTAAAPPTDS). A propeptide spanning residues 27–76 (IDLMQMDPSLADDESLGFAMQSLSGRYAAAPWLYLLADVSHDPQNGSDRV) is cleaved from the precursor. I119 is subject to Isoleucine amide. The propeptide occupies 123 to 136 (GFHWAPSAKAAKFY).

Belongs to the sauvagine/corticotropin-releasing factor/urotensin I family.

The protein localises to the secreted. Functionally, regulation of fluid secretion. The polypeptide is Diuretic hormone 41 (dh41) (Bombyx mori (Silk moth)).